A 149-amino-acid chain; its full sequence is MRSDIGRLSKYLIERKKNLGLTWEDVSRKLGKSPVYCAMLFYGYAQADDEEVKAVAELLNLEEKELAELKDAPYREPQQPVPPTDPFVYRLYEVVILYGPALKDVAHEMFGDGIMSAIDMSVELEKVEQEGAERMVLTFNGKWLKYRKF.

Catalysis depends on residues R90, E93, and S116.

This sequence belongs to the cyanase family.

It catalyses the reaction cyanate + hydrogencarbonate + 3 H(+) = NH4(+) + 2 CO2. Functionally, catalyzes the reaction of cyanate with bicarbonate to produce ammonia and carbon dioxide. This is Cyanate hydratase from Aquifex aeolicus (strain VF5).